Here is a 397-residue protein sequence, read N- to C-terminus: MAGYEYVSPEQLAGFDKHKYSAVDTNPLSLYVMHPFWNTIVKVFPTWLAPNLITFSGFLLVVFNFLLMAYFDPDFYASAPGHKHVPDWVWIVVGILNFVAYTLDGVDGKQARRTNSSTPLGELFDHGLDNWSYVYFVVTVYSIFGRGSTGVSVFVLYLLLWVVLFSFILSHWEKYNTGILFLPWGYDISQVTISFVYIVTAVVGVEAWYEPFLFNFLYRDLFTAMIIGCALCVTLPMSLLNFFRSYKNNTLKLNSVYEAMVPLFSPCLLFILSTAWILWSPSDILELHPRVFYFMVGTAFANSTCQLIVCQMSSTRCPTLNWLLVPLFLVVLVVNLGVASYVESILLYTLTTAFTLAHIHYGVRVVKQLSSHFQIYPFSLRKPNSDULGMEEKNIGL.

Position 2 is an N-acetylalanine (Ala2). Transmembrane regions (helical) follow at residues Trp47–Ala69, His84–Leu103, Leu123–Gly145, Gly150–Trp172, Ile179–Ala201, Leu221–Phe243, Val256–Leu278, Val291–Cys310, Cys317–Ala339, and Ser344–Val366. A non-standard amino acid (selenocysteine) is located at residue Sec387.

It belongs to the CDP-alcohol phosphatidyltransferase class-I family. Mg(2+) is required as a cofactor. The cofactor is Mn(2+).

The protein resides in the endoplasmic reticulum membrane. The catalysed reaction is CDP-ethanolamine + a 1,2-diacyl-sn-glycerol = a 1,2-diacyl-sn-glycero-3-phosphoethanolamine + CMP + H(+). It catalyses the reaction 1-O-alkyl-2-acyl-sn-glycerol + CDP-ethanolamine = a 1-O-alkyl-2-acyl-sn-glycero-3-phosphoethanolamine + CMP + H(+). The protein operates within phospholipid metabolism; phosphatidylethanolamine biosynthesis; phosphatidylethanolamine from ethanolamine: step 3/3. Ethanolaminephosphotransferase that catalyzes the transfer of phosphoethanolamine (PE) from CDP-ethanolamine to lipid acceptors, the final step in the synthesis of PE via the 'Kennedy' pathway. PE is the second most abundant phospholipid of membranes in mammals and is involved in various membrane-related cellular processes. The enzyme is critical for the synthesis of several PE species and also catalyzes the synthesis of plasmanyl-PE, a lipid required for proper myelination and neurodevelopment, from 1-alkyl-2-acylglycerol. In Pongo abelii (Sumatran orangutan), this protein is Ethanolaminephosphotransferase 1.